Consider the following 66-residue polypeptide: Large ribosomal subunit protein bL33 (66 aa).

It belongs to the bacterial ribosomal protein bL33 family.

The protein is Large ribosomal subunit protein bL33 of Wolbachia sp. subsp. Brugia malayi (strain TRS).